A 456-amino-acid polypeptide reads, in one-letter code: Signal recognition particle 54 kDa protein (456 aa).

GTP contacts are provided by residues 104 to 111 (GLYGNGKT), 184 to 188 (DTSGR), and 242 to 245 (TKMD).

This sequence belongs to the GTP-binding SRP family. SRP54 subfamily. As to quaternary structure, part of the signal recognition particle protein translocation system, which is composed of SRP and FtsY. Archaeal SRP consists of a 7S RNA molecule of 300 nucleotides and two protein subunits: SRP54 and SRP19.

It is found in the cytoplasm. It catalyses the reaction GTP + H2O = GDP + phosphate + H(+). Involved in targeting and insertion of nascent membrane proteins into the cytoplasmic membrane. Binds to the hydrophobic signal sequence of the ribosome-nascent chain (RNC) as it emerges from the ribosomes. The SRP-RNC complex is then targeted to the cytoplasmic membrane where it interacts with the SRP receptor FtsY. This chain is Signal recognition particle 54 kDa protein, found in Thermoplasma acidophilum (strain ATCC 25905 / DSM 1728 / JCM 9062 / NBRC 15155 / AMRC-C165).